The primary structure comprises 691 residues: DNA ligase (691 aa).

Residues 41 to 45 (DAEYD), 90 to 91 (SL), and E130 each bind NAD(+). K132 serves as the catalytic N6-AMP-lysine intermediate. The NAD(+) site is built by R153, E190, K307, and K331. Residues C425, C428, C443, and C449 each contribute to the Zn(2+) site. One can recognise a BRCT domain in the interval 610–691 (APQGVLAGKT…MHTLLEGHAR (82 aa)).

The protein belongs to the NAD-dependent DNA ligase family. LigA subfamily. The cofactor is Mg(2+). Mn(2+) is required as a cofactor.

The catalysed reaction is NAD(+) + (deoxyribonucleotide)n-3'-hydroxyl + 5'-phospho-(deoxyribonucleotide)m = (deoxyribonucleotide)n+m + AMP + beta-nicotinamide D-nucleotide.. Functionally, DNA ligase that catalyzes the formation of phosphodiester linkages between 5'-phosphoryl and 3'-hydroxyl groups in double-stranded DNA using NAD as a coenzyme and as the energy source for the reaction. It is essential for DNA replication and repair of damaged DNA. The sequence is that of DNA ligase from Burkholderia pseudomallei (strain 668).